Reading from the N-terminus, the 220-residue chain is Deoxyribose-phosphate aldolase (220 aa).

Residue Asp-92 is the Proton donor/acceptor of the active site. Lys-155 acts as the Schiff-base intermediate with acetaldehyde in catalysis. Residue Lys-184 is the Proton donor/acceptor of the active site.

Belongs to the DeoC/FbaB aldolase family. DeoC type 1 subfamily.

It is found in the cytoplasm. It carries out the reaction 2-deoxy-D-ribose 5-phosphate = D-glyceraldehyde 3-phosphate + acetaldehyde. It functions in the pathway carbohydrate degradation; 2-deoxy-D-ribose 1-phosphate degradation; D-glyceraldehyde 3-phosphate and acetaldehyde from 2-deoxy-alpha-D-ribose 1-phosphate: step 2/2. Its function is as follows. Catalyzes a reversible aldol reaction between acetaldehyde and D-glyceraldehyde 3-phosphate to generate 2-deoxy-D-ribose 5-phosphate. This chain is Deoxyribose-phosphate aldolase, found in Symbiobacterium thermophilum (strain DSM 24528 / JCM 14929 / IAM 14863 / T).